The sequence spans 66 residues: Large ribosomal subunit protein bL33c (66 aa).

Belongs to the bacterial ribosomal protein bL33 family.

It localises to the plastid. The protein localises to the chloroplast. This Cicer arietinum (Chickpea) protein is Large ribosomal subunit protein bL33c.